The following is a 29-amino-acid chain: GWTLNSAGYLLGPHAVDNHRSFNDKHGFT.

Thr-29 carries the threonine amide modification.

Belongs to the galanin family.

Its subcellular location is the secreted. Functionally, contracts smooth muscle of the gastrointestinal and genitourinary tract, regulates growth hormone release, modulates insulin release, and may be involved in the control of adrenal secretion. This Gallus gallus (Chicken) protein is Galanin (GAL).